Reading from the N-terminus, the 644-residue chain is Pentatricopeptide repeat-containing protein At1g12775, mitochondrial (644 aa).

A mitochondrion-targeting transit peptide spans M1–N53. PPR repeat units follow at residues T87–H121, S122–P156, D157–P191, T192–P226, N227–L261, D262–A296, D297–P331, N332–P366, N367–P401, D402–A436, N437–P471, D472–L506, D507–L541, D542–P576, and D577–A611.

This sequence belongs to the PPR family. P subfamily.

It is found in the mitochondrion. The chain is Pentatricopeptide repeat-containing protein At1g12775, mitochondrial from Arabidopsis thaliana (Mouse-ear cress).